The primary structure comprises 140 residues: Ribosome-binding factor A (140 aa).

The disordered stretch occupies residues 116–140 (RERQERGEIPPGSDDAQNCHDDEPS).

Belongs to the RbfA family. Monomer. Binds 30S ribosomal subunits, but not 50S ribosomal subunits or 70S ribosomes.

The protein localises to the cytoplasm. Its function is as follows. One of several proteins that assist in the late maturation steps of the functional core of the 30S ribosomal subunit. Associates with free 30S ribosomal subunits (but not with 30S subunits that are part of 70S ribosomes or polysomes). Required for efficient processing of 16S rRNA. May interact with the 5'-terminal helix region of 16S rRNA. The sequence is that of Ribosome-binding factor A from Synechococcus sp. (strain WH7803).